A 497-amino-acid chain; its full sequence is QYNPNTQPGRTSIVHLFEWRWADIALECERYLAPYGFGGVQVSPPNENVIITNPYRPWWERYQPVSYKLCTRSGNENEFRDMVTRCNNVGVRIYVDAVKNHMCGSGAGSGTHSTCGAYFNAGNRDSPAVPYSGWDFNDGKCRTGSGEIENYGDASQVRDCRLVGLLDLALEKDYVRSTVAGYMNHLIDIGVAGFRLDAAKHMWPGDIKAFLDKLHNLNTNWFSSGSRPFIYQEVIDLGGEPITSSQYFGNHRVTEFKYGAKLGTVIRKWNGEKMAYLKNWGEGWGFVPSDRALVFVDNHDNQRGHGAGGASILTFWDARLYKMAVGFMLAHPYGFTRVMSSFRWPRHFENGKDVNDWYGPPSNSDGSTKEVTINADSTCGNDWVCEHRWRQIRNMVIFRNVVDGEPFSNWWDNNSNQVAFGRGSKGFIVFNNDDWHMNVDLYTGLPAGTYCDVISGQKEGSRCTGIQVYVSGNGKANFQISNNAEDPFIAIHVGAKL.

The residue at position 1 (Gln1) is a Pyrrolidone carboxylic acid. Disulfide bonds link Cys28-Cys86, Cys70-Cys115, and Cys141-Cys160. 3 residues coordinate Ca(2+): Asn100, Arg158, and Asp167. Arg195 serves as a coordination point for chloride. Asp197 (nucleophile) is an active-site residue. A Ca(2+)-binding site is contributed by His201. The active-site Proton donor is the Glu233. Chloride-binding residues include Asn298 and Arg337. 2 cysteine pairs are disulfide-bonded: Cys379/Cys385 and Cys451/Cys463.

Belongs to the glycosyl hydrolase 13 family. As to quaternary structure, monomer. The cofactor is Ca(2+). Chloride is required as a cofactor.

It is found in the secreted. The protein resides in the extracellular space. It carries out the reaction Endohydrolysis of (1-&gt;4)-alpha-D-glucosidic linkages in polysaccharides containing three or more (1-&gt;4)-alpha-linked D-glucose units.. The polypeptide is Pancreatic alpha-amylase (Struthio camelus (Common ostrich)).